The chain runs to 152 residues: Superoxide dismutase [Cu-Zn] (152 aa).

Positions 45, 47, and 62 each coordinate Cu cation. The segment at 61–87 (PHFNPAGKEHGAPEDENRHAGDLGNAT) is disordered. Zn(2+)-binding residues include histidine 62, histidine 70, histidine 79, and aspartate 82. Residues 67–81 (GKEHGAPEDENRHAG) show a composition bias toward basic and acidic residues. Histidine 119 serves as a coordination point for Cu cation.

Belongs to the Cu-Zn superoxide dismutase family. In terms of assembly, homodimer. Requires Cu cation as cofactor. Zn(2+) serves as cofactor.

Its subcellular location is the cytoplasm. The catalysed reaction is 2 superoxide + 2 H(+) = H2O2 + O2. Functionally, destroys radicals which are normally produced within the cells and which are toxic to biological systems. The polypeptide is Superoxide dismutase [Cu-Zn] (Zingiber officinale (Ginger)).